We begin with the raw amino-acid sequence, 216 residues long: Protein-methionine-sulfoxide reductase heme-binding subunit MsrQ (216 aa).

Transmembrane regions (helical) follow at residues 16–36 (IWAL…LGAT), 48–68 (EHLL…ITPI), 82–102 (ALGL…MVLD), 119–139 (FITI…TSNI), and 155–175 (LVYV…KVVG).

This sequence belongs to the MsrQ family. In terms of assembly, heterodimer of a catalytic subunit (MsrP) and a heme-binding subunit (MsrQ). The cofactor is FMN. Requires heme b as cofactor.

The protein localises to the cell inner membrane. Its function is as follows. Part of the MsrPQ system that repairs oxidized periplasmic proteins containing methionine sulfoxide residues (Met-O), using respiratory chain electrons. Thus protects these proteins from oxidative-stress damage caused by reactive species of oxygen and chlorine generated by the host defense mechanisms. MsrPQ is essential for the maintenance of envelope integrity under bleach stress, rescuing a wide series of structurally unrelated periplasmic proteins from methionine oxidation. MsrQ provides electrons for reduction to the reductase catalytic subunit MsrP, using the quinone pool of the respiratory chain. The chain is Protein-methionine-sulfoxide reductase heme-binding subunit MsrQ from Rhizobium meliloti (strain 1021) (Ensifer meliloti).